We begin with the raw amino-acid sequence, 340 residues long: MAVSIYYDKDCDINLIKSKKVAIIGFGSQGHAHAMNLRDSGVEVIIGLKEGGQSWAKAQKANFIVKSVKEATKEADLIMILAPDEIQSEIFNEEIKPELKAGKTLAFAHGFNIHYGQIVAPKGIDVIMIAPKAPGHTVRHEFSIGGGTPCLIAIHQDESKNAKNLALSYASAIGGGRTGIIETTFKAETETDLFGEQAVLCGGLSALIQAGFETLVEAGYEPEMAYFECLHEMKLIVDLIYQGGIADMRYSVSNTAEYGDYITGPKIITKETKEAMKGVLKDIQNGSFAKDFILERRANFARMHAERKLMNDSLIEKTGRELRAMMPWISAKKLVDKDKN.

The KARI N-terminal Rossmann domain maps to 3–183 (VSIYYDKDCD…GGGRTGIIET (181 aa)). Residues 26–29 (FGSQ), K49, S54, and 84–87 (DEIQ) each bind NADP(+). H109 is a catalytic residue. G135 is a binding site for NADP(+). The region spanning 184 to 329 (TFKAETETDL…RELRAMMPWI (146 aa)) is the KARI C-terminal knotted domain. D192, E196, E228, and E232 together coordinate Mg(2+). A substrate-binding site is contributed by S253.

This sequence belongs to the ketol-acid reductoisomerase family. Mg(2+) is required as a cofactor.

It catalyses the reaction (2R)-2,3-dihydroxy-3-methylbutanoate + NADP(+) = (2S)-2-acetolactate + NADPH + H(+). It carries out the reaction (2R,3R)-2,3-dihydroxy-3-methylpentanoate + NADP(+) = (S)-2-ethyl-2-hydroxy-3-oxobutanoate + NADPH + H(+). It participates in amino-acid biosynthesis; L-isoleucine biosynthesis; L-isoleucine from 2-oxobutanoate: step 2/4. It functions in the pathway amino-acid biosynthesis; L-valine biosynthesis; L-valine from pyruvate: step 2/4. In terms of biological role, involved in the biosynthesis of branched-chain amino acids (BCAA). Catalyzes an alkyl-migration followed by a ketol-acid reduction of (S)-2-acetolactate (S2AL) to yield (R)-2,3-dihydroxy-isovalerate. In the isomerase reaction, S2AL is rearranged via a Mg-dependent methyl migration to produce 3-hydroxy-3-methyl-2-ketobutyrate (HMKB). In the reductase reaction, this 2-ketoacid undergoes a metal-dependent reduction by NADPH to yield (R)-2,3-dihydroxy-isovalerate. The chain is Ketol-acid reductoisomerase (NADP(+)) from Campylobacter lari (strain RM2100 / D67 / ATCC BAA-1060).